Reading from the N-terminus, the 714-residue chain is Macrophage-expressed gene 1 protein (714 aa).

The signal sequence occupies residues 1 to 19; the sequence is MNSFMAIALIWMMIACAEA. Residues 30 to 345 form the MACPF domain; the sequence is GFQTCKDTLK…TAVRHYYTFN (316 aa). Residues Cys-34 and Cys-70 are joined by a disulfide bond. The next 2 membrane-spanning stretches (beta stranded) occupy residues 113–120 and 127–132; these read FSINTELS and GKFSTE. The N-linked (GlcNAc...) asparagine glycan is linked to Asn-185. Beta stranded transmembrane passes span 235–244 and 248–256; these read TVTASAGIAF and VNFKVETDH. Asn-269 carries N-linked (GlcNAc...) asparagine glycosylation. A disulfide bridge connects residues Cys-350 and Cys-369. N-linked (GlcNAc...) asparagine glycosylation is present at Asn-375. Intrachain disulfides connect Cys-385/Cys-394, Cys-432/Cys-446, Cys-436/Cys-442, Cys-531/Cys-569, and Cys-554/Cys-574. The tract at residues 410–653 is P2; it reads PSGYTPVHLL…GDGNGMSGGE (244 aa). Residues 654 to 674 traverse the membrane as a helical segment; it reads AAGVTLGVIIALGIVITLAIY. A disordered region spans residues 690 to 714; sequence EQESLVGSFATDASPPNGEQDPCPA.

Belongs to the MPEG1 family. Homooligomer; predominantly forms a homooligomeric arc-shaped pore complex instead of complete rings of 16 subunits. Proteolytically processed in two steps to generate the Macrophage-expressed gene 1 protein, processed form: cleaved by trypsin in proximity of the helical transmembrane domain releases the ectodomain into the lysosomal lumen to orient the pore-forming domain toward the endogenous membranes, and processed by the asparagine endopeptidase (LGMN). Proteolytic processing in antigen-containing vesicles is pH-dependent. Post-translationally, monoubiquitinated in response to bacterial infection; ubiquitination is required for vesicular localization and antibacterial activity and can be blocked by bacterial cell cycle inhibiting factor (cif).

It localises to the cytoplasmic vesicle membrane. It is found in the cytoplasmic vesicle. Its subcellular location is the phagosome membrane. Forms arc- and ring-shaped pre-pores on top of the membrane at neutral to slightly acidic pH conditions and converts to pores upon acidification. Undergoes transition from the pre-pore to the pore in a processive clockwise hand-over-hand process. In the pore state, 2 alpha-helical regions refold into transmembrane hairpins (TMH1 and TMH2) in each protomer that form in the ensemble complex giant beta-barrel transmembrane pores. Functionally, pore-forming protein involved in both innate and adaptive immunity. Plays a central role in antigen cross-presentation in dendritic cells by forming a pore in antigen-containing compartments, thereby promoting delivery of antigens for cross-presentation. Also involved in innate immune response following bacterial infection; shows antibacterial activity against a wide spectrum of Gram-positive, Gram-negative and acid-fast bacteria. Reduces the viability of the intracytosolic pathogen L.monocytogenes by inhibiting acidification of the phagocytic vacuole of host cells which restricts bacterial translocation from the vacuole to the cytosol. Required for the antibacterial activity of reactive oxygen species and nitric oxide. In terms of biological role, pore-forming protein that plays a central role in antigen cross-presentation in dendritic cells by mediating delivery of antigens for cross-presentation. Dendritic cells bridge innate and adaptive immunity by capturing exogenous antigens on MHC class-I molecules and presenting them to naive CD8(+) T-cells. Acts by forming a pore in antigen-containing compartments, promoting the release of antigens into the cytosol, enabling generation of MHCI:peptide complexes and T-cell priming. This is Macrophage-expressed gene 1 protein (Mpeg1) from Rattus norvegicus (Rat).